A 128-amino-acid chain; its full sequence is MAYRKLGRTSSQRKAVLRDLTTDLIINEAIVTTEARAKEIRKTVEKMITLGKRGDLHARRQAAAFVRNEIASESYDEATDKYTSTTALQKLFSEIAPRYTERNGGYTRILKTEPRRGDAAPMAIIELV.

It belongs to the bacterial ribosomal protein bL17 family. As to quaternary structure, part of the 50S ribosomal subunit. Contacts protein L32.

The polypeptide is Large ribosomal subunit protein bL17 (Streptococcus thermophilus (strain ATCC BAA-250 / LMG 18311)).